The primary structure comprises 20 residues: GLWSTIKNVAAAAGKAAIKL.

Position 20 is a leucine amide (Leu20).

In terms of tissue distribution, expressed by the skin glands.

It is found in the secreted. Antimicrobial peptide with moderate activity against both Gram-positive and Gram-negative bacteria, and important activity against Leishmania species (L.amazonensis and L.infantum). Acts on both Leishmania promastigote and amastigote forms. Shows activity against E.coli (MIC=17.8 uM), S.aureus (MIC=32.3 uM) and the phytopathogenic bacterium Xanthomonas axonopodis (MIC=2 uM). Shows low cytotoxicity against mammalian cells in models of peritoneal macrophages. In Pithecopus nordestinus (Northeastern Brazilian leaf frog), this protein is Dermaseptin-N1.